We begin with the raw amino-acid sequence, 172 residues long: 16S rRNA aminocarboxypropyltransferase (172 aa).

4 residues coordinate S-adenosyl-L-methionine: Thr21, Leu71, Leu93, and Thr112.

This sequence belongs to the TDD superfamily. TSR3 family.

The protein resides in the cytoplasm. It catalyses the reaction an N(1)-methylpseudouridine in rRNA + S-adenosyl-L-methionine = N(1)-methyl-N(3)-[(3S)-3-amino-3-carboxypropyl]pseudouridine in rRNA + S-methyl-5'-thioadenosine + H(+). Functionally, aminocarboxypropyltransferase that catalyzes the aminocarboxypropyl transfer on pseudouridine at position 914 in 16S rRNA. It constitutes the last step in biosynthesis of the hypermodified N1-methyl-N3-(3-amino-3-carboxypropyl) pseudouridine (m1acp3-Psi). The chain is 16S rRNA aminocarboxypropyltransferase from Methanocaldococcus jannaschii (strain ATCC 43067 / DSM 2661 / JAL-1 / JCM 10045 / NBRC 100440) (Methanococcus jannaschii).